A 925-amino-acid polypeptide reads, in one-letter code: Neuropilin-2 (925 aa).

A signal peptide spans 1–22 (MDMFPLTWIFLALYFSGHKVRS). The Extracellular segment spans residues 23-858 (QQDPPCGGRL…EKSWLYTLDP (836 aa)). 3 disulfides stabilise this stretch: C28–C55, C83–C105, and C149–C175. 2 consecutive CUB domains span residues 28–142 (CGGR…YEIF) and 149–267 (CSKN…YYLV). N152 and N157 each carry an N-linked (GlcNAc...) asparagine glycan. Ca(2+) contacts are provided by E197, D211, and D252. Cysteines 208 and 230 form a disulfide. Cystine bridges form between C277-C427 and C434-C592. 2 F5/8 type C domains span residues 277–427 (CNAP…LFGC) and 434–592 (CSNM…VLGC). The span at 297 to 310 (STFSDGRWTPQQSR) shows a compositional bias: polar residues. A disordered region spans residues 297 to 317 (STFSDGRWTPQQSRLHGDDNG). A disordered region spans residues 601–621 (VETLGPTVKSEETTTPYPMDE). N-linked (GlcNAc...) asparagine glycosylation occurs at N629. In terms of domain architecture, MAM spans 642–802 (SGFNCNFDFP…TDVPLENCME (161 aa)). The segment covering 820–830 (YEDEIDDDYEG) has biased composition (acidic residues). Residues 820–849 (YEDEIDDDYEGDWNNSSSTSGAGSPSSGKE) form a disordered region. Residues N833 and N834 are each glycosylated (N-linked (GlcNAc...) asparagine). The segment covering 835–846 (SSSTSGAGSPSS) has biased composition (low complexity). Residues 859 to 883 (ILITIIAMSSLGVLLGATCAGLLLY) form a helical membrane-spanning segment. Over 884–925 (CTCSYSGLSSRSCTTLENYNFELYDGLKHKVKINHQKCCSEA) the chain is Cytoplasmic.

The protein belongs to the neuropilin family. Heterodimer with NRP1. Binds PLXNB1. Found in certain neuronal populations of the CNS, including dorsal root ganglia, and in other non-neuronal tissues including mesenchymal tissue lining in the ribs.

It is found in the membrane. Functionally, high affinity receptor for semaphorins 3C, 3F, VEGF-165 and VEGF-145 isoforms of VEGF, and the PLGF-2 isoform of PGF. The sequence is that of Neuropilin-2 (Nrp2) from Rattus norvegicus (Rat).